Reading from the N-terminus, the 305-residue chain is MEKVSVETLIKDLNLEVIVKAENNKIDITTSDVNRPGLQFAGFYEHFAYERVQIMGKVETTFVEQLPDEVLAERADKFFAYPIPCLIVTRDLNIRQEIIEAAKKHDRYLLRTKEASTKFINRLINYLDEKLAPQITIHGNLVDVYGIGVLLLGESGIGKSETALELVKRGHRLVADDAVEIRKIGEDKLQGSAPEIIRHFIEIRGIGILDVKTLYGVGSVRNSMSIDLVIQLEEWDEDKYYDRLGLEDEYIKFLDVEVPKLTIPVRPGRNLAIIVEVAAMNHRQKQMGYNAAHELNKKLLKQIGN.

Residues His138 and Lys159 contribute to the active site. 153-160 (GESGIGKS) is an ATP binding site. Ser160 serves as a coordination point for Mg(2+). The active-site Proton acceptor; for phosphorylation activity. Proton donor; for dephosphorylation activity is Asp177. The tract at residues 201-210 (IEIRGIGILD) is important for the catalytic mechanism of both phosphorylation and dephosphorylation. A Mg(2+)-binding site is contributed by Glu202. Arg243 is a catalytic residue. Residues 264–269 (PVRPGR) form an important for the catalytic mechanism of dephosphorylation region.

The protein belongs to the HPrK/P family. Homohexamer. Requires Mg(2+) as cofactor.

It catalyses the reaction [HPr protein]-L-serine + ATP = [HPr protein]-O-phospho-L-serine + ADP + H(+). It carries out the reaction [HPr protein]-O-phospho-L-serine + phosphate + H(+) = [HPr protein]-L-serine + diphosphate. Functionally, catalyzes the ATP- as well as the pyrophosphate-dependent phosphorylation of a specific serine residue in HPr, a phosphocarrier protein of the phosphoenolpyruvate-dependent sugar phosphotransferase system (PTS). HprK/P also catalyzes the pyrophosphate-producing, inorganic phosphate-dependent dephosphorylation (phosphorolysis) of seryl-phosphorylated HPr (P-Ser-HPr). The two antagonistic activities of HprK/P are regulated by several intracellular metabolites, which change their concentration in response to the absence or presence of rapidly metabolisable carbon sources (glucose, fructose, etc.) in the growth medium. Therefore, by controlling the phosphorylation state of HPr, HPrK/P is a sensor enzyme that plays a major role in the regulation of carbon metabolism and sugar transport: it mediates carbon catabolite repression (CCR), and regulates PTS-catalyzed carbohydrate uptake and inducer exclusion. In Caldanaerobacter subterraneus subsp. tengcongensis (strain DSM 15242 / JCM 11007 / NBRC 100824 / MB4) (Thermoanaerobacter tengcongensis), this protein is HPr kinase/phosphorylase.